The primary structure comprises 190 residues: MSGLRPALSTFIFLLLITGGVYPLLTTALGQWWFPWQANGSLIREGDTVRGSALIGQNFTGNGYFHGRPSATAEMPYNPQASGGSNLAVSNPELDKLIAARVAALRAANPDASTSVPVELVTASASGLDNNITPQAAAWQIPRVAKARNLSVEQLTQLIAKYSQQPLVKYIGQPVVNIVELNLALDKLDE.

The helical transmembrane segment at 10 to 30 (TFIFLLLITGGVYPLLTTALG) threads the bilayer.

The protein belongs to the KdpC family. The system is composed of three essential subunits: KdpA, KdpB and KdpC.

Its subcellular location is the cell inner membrane. Part of the high-affinity ATP-driven potassium transport (or Kdp) system, which catalyzes the hydrolysis of ATP coupled with the electrogenic transport of potassium into the cytoplasm. This subunit acts as a catalytic chaperone that increases the ATP-binding affinity of the ATP-hydrolyzing subunit KdpB by the formation of a transient KdpB/KdpC/ATP ternary complex. This Escherichia coli O9:H4 (strain HS) protein is Potassium-transporting ATPase KdpC subunit.